The primary structure comprises 175 residues: Ribosome maturation factor RimM (175 aa).

In terms of domain architecture, PRC barrel spans 96–175 (EGDFYWHDLI…TIEVDWDAGF (80 aa)).

Belongs to the RimM family. As to quaternary structure, binds ribosomal protein uS19.

It is found in the cytoplasm. Its function is as follows. An accessory protein needed during the final step in the assembly of 30S ribosomal subunit, possibly for assembly of the head region. Essential for efficient processing of 16S rRNA. May be needed both before and after RbfA during the maturation of 16S rRNA. It has affinity for free ribosomal 30S subunits but not for 70S ribosomes. This chain is Ribosome maturation factor RimM, found in Histophilus somni (strain 129Pt) (Haemophilus somnus).